The sequence spans 153 residues: MTTQVRKNVMDMFIDGARRGFTIATTNLLPNVVMAFVIIQALKITGLLDWVGHICEPVMALWGLPGEAATVLLAALMSMGGAVGVAASLATAGALTGHDVTVLLPAMYLMGNPVQNVGRCLGTAEVNAKYYPHIITVCVINALLSIWVMQLIV.

Over 1–31 (MTTQVRKNVMDMFIDGARRGFTIATTNLLPN) the chain is Periplasmic. A helical transmembrane segment spans residues 32–52 (VVMAFVIIQALKITGLLDWVG). The Cytoplasmic segment spans residues 53-68 (HICEPVMALWGLPGEA). A run of 2 helical transmembrane segments spans residues 69-89 (ATVLLAALMSMGGAVGVAASL) and 90-110 (ATAGALTGHDVTVLLPAMYLM). Residues 111 to 132 (GNPVQNVGRCLGTAEVNAKYYP) are Cytoplasmic-facing. The helical transmembrane segment at 133-153 (HIITVCVINALLSIWVMQLIV) threads the bilayer.

The protein belongs to the SpmB family.

It localises to the cell inner membrane. The sequence is that of Inner membrane protein YjiG (yjiG) from Escherichia coli O157:H7.